The primary structure comprises 163 residues: Nucleotide-binding protein DvMF_3058 (163 aa).

The protein belongs to the YajQ family.

Functionally, nucleotide-binding protein. This is Nucleotide-binding protein DvMF_3058 from Nitratidesulfovibrio vulgaris (strain DSM 19637 / Miyazaki F) (Desulfovibrio vulgaris).